The chain runs to 398 residues: DJ-1 protein homolog E (398 aa).

PfpI endopeptidase domains are found at residues 7–199 (KSAL…ESLG) and 210–393 (ASVL…TALG).

It belongs to the peptidase C56 family. As to quaternary structure, homotrimer. In terms of tissue distribution, expressed in roots and cauline leaves.

Its function is as follows. May be involved in oxidative stress response. The chain is DJ-1 protein homolog E (DJ1E) from Arabidopsis thaliana (Mouse-ear cress).